We begin with the raw amino-acid sequence, 4910 residues long: Midasin (4910 aa).

2 AAA-ATPase protomer regions span residues 305–528 (IQNS…DILF) and 636–975 (MEQI…TDII). ATP contacts are provided by residues 315–322 (GKAGSGKT) and 653–660 (GETGTGKT). An interaction with RIX1 region spans residues 695-803 (VNSKTVAVPI…KKFEAQSSSI (109 aa)). Residue threonine 1026 is modified to Phosphothreonine. 4 AAA-ATPase protomer regions span residues 1054 to 1280 (HYII…WALR), 1345 to 1624 (KGMR…VEFI), 1732 to 1985 (RVVR…QLLI), and 2036 to 2286 (VYES…DELH). Residues 1083 to 1090 (GPTSSGKT), 1368 to 1375 (GETGCGKT), 1747 to 1754 (GSPGVGKT), and 2054 to 2061 (GPSNSGKT) contribute to the ATP site. The segment at 2372–4075 (EVGKWANNVL…DGEGAQNNNK (1704 aa)) is linker. Position 2971 is a phosphoserine (serine 2971). Disordered regions lie at residues 4045-4547 (SPQP…EKMD), 4555-4574 (SDID…SGFI), and 4579-4600 (SEED…EDDS). The span at 4078–4088 (EQDEDLTEDAQ) shows a compositional bias: acidic residues. A compositionally biased stretch (basic and acidic residues) spans 4089–4098 (NENKEQQDKD). Residues 4099-4154 (ERDDENEDDAVEMEGDMAGELEDLSNGEENDDEDTDSEEEELDEEIDDLNEDDPNA) show a composition bias toward acidic residues. A compositionally biased stretch (basic and acidic residues) spans 4155-4174 (IDDKMWDDKASDNSKEKDTD). Composition is skewed to acidic residues over residues 4202 to 4244 (GDED…EDLE), 4251 to 4274 (ETLD…DVDM), and 4288 to 4358 (GNED…EEEL). Phosphoserine is present on serine 4353. Over residues 4359 to 4372 (KQDAAMEENKEKGG) the composition is skewed to basic and acidic residues. Threonine 4388 carries the phosphothreonine modification. Composition is skewed to basic and acidic residues over residues 4435–4447 (DVTK…REEA) and 4481–4495 (LEKN…EHVE). Residues 4498 to 4516 (NTETDTQALGSATQDQLQT) show a composition bias toward polar residues. Residues 4517–4531 (IDEDMAIDDDREEQE) are compositionally biased toward acidic residues. The residue at position 4555 (serine 4555) is a Phosphoserine. Basic and acidic residues predominate over residues 4557–4570 (IDAHDANNDVDSKK). The VWFA domain occupies 4704-4899 (QIMIALDDSK…SELPEMLSLI (196 aa)).

The protein belongs to the midasin family. As to quaternary structure, associates with pre-60S ribosomes in the nucleoplasm. Interacts (via its hexameric AAA ATPase ring) with the RIX1 complex (via RIX1); this interaction is crucial for recruitment of MDN1 to the pre-ribosomal particle. Interacts (via VWFA/MIDAS domain) with YTM1 (via UBL domain). Interacts (via VWFA/MIDAS domain) with RSA4 (via UBL domain).

The protein resides in the nucleus. It localises to the nucleolus. It is found in the nucleoplasm. Nuclear chaperone required for maturation and nuclear export of pre-60S ribosome subunits. Functions at successive maturation steps to remove ribosomal factors at critical transition points, first driving the exit of early pre-60S particles from the nucleolus and then driving late pre-60S particles from the nucleus. At an early stage in 60S maturation, mediates the dissociation of the NOP7 complex (YTM1-ERB1-NOP7) from early pre-60S particles, rendering them competent for export from the nucleolus to the nucleoplasm. Subsequently recruited to the nucleoplasmic particles through interaction with the RIX1 complex. This binding is only possible if the 5S RNP at the central protuberance has undergone the rotation to complete its maturation. After remodeling, removes the ribosome biogenesis factor RSA4 in an ATP hydrolysis-driven step from pre-60S ribosomal subunits, rendering them competent for export from the nucleoplasm to the cytoplasm. Activates the GTPase activity of NOG2, which disengages from the pre-60S particle upon GTP hydrolysis, thus freeing its binding site for the nuclear export factor NMD3. This chain is Midasin (MDN1), found in Saccharomyces cerevisiae (strain ATCC 204508 / S288c) (Baker's yeast).